The sequence spans 464 residues: Glutamate--tRNA ligase 2 (464 aa).

The 'HIGH' region motif lies at 11–21 (PSPTGFLHIGS). A 'KMSKS' region motif is present at residues 240-244 (KLSKR). Residue Lys-243 participates in ATP binding.

Belongs to the class-I aminoacyl-tRNA synthetase family. Glutamate--tRNA ligase type 1 subfamily. As to quaternary structure, monomer.

The protein localises to the cytoplasm. The enzyme catalyses tRNA(Glu) + L-glutamate + ATP = L-glutamyl-tRNA(Glu) + AMP + diphosphate. Catalyzes the attachment of glutamate to tRNA(Glu) in a two-step reaction: glutamate is first activated by ATP to form Glu-AMP and then transferred to the acceptor end of tRNA(Glu). The sequence is that of Glutamate--tRNA ligase 2 from Rickettsia bellii (strain OSU 85-389).